The sequence spans 220 residues: GTP cyclohydrolase 1 (220 aa).

Zn(2+) contacts are provided by cysteine 110, histidine 113, and cysteine 181.

The protein belongs to the GTP cyclohydrolase I family. As to quaternary structure, toroid-shaped homodecamer, composed of two pentamers of five dimers.

The catalysed reaction is GTP + H2O = 7,8-dihydroneopterin 3'-triphosphate + formate + H(+). Its pathway is cofactor biosynthesis; 7,8-dihydroneopterin triphosphate biosynthesis; 7,8-dihydroneopterin triphosphate from GTP: step 1/1. In Baumannia cicadellinicola subsp. Homalodisca coagulata, this protein is GTP cyclohydrolase 1.